Reading from the N-terminus, the 504-residue chain is DNA-binding protein reb1 (504 aa).

A disordered region spans residues 30–51 (DFDDFPLNKGLKTNNNDYSGSI). HTH myb-type domains follow at residues 308 to 361 (NPFE…RFGD) and 362 to 422 (KLKR…KAAS). DNA-binding regions (H-T-H motif) lie at residues 335–357 (WTKI…RDVV) and 395–418 (WTLV…QQLT).

It localises to the nucleus. Its function is as follows. DNA-binding protein that recognizes sites within both the enhancer and the promoter of rRNA transcription, as well as upstream of many genes transcribed by RNA polymerase II. Has a role in the termination of RNA polymerase I catalyzed transcription. This is DNA-binding protein reb1 (reb1) from Schizosaccharomyces pombe (strain 972 / ATCC 24843) (Fission yeast).